The chain runs to 432 residues: Putative O-antigen transporter (432 aa).

A run of 12 helical transmembrane segments spans residues 14–34, 47–67, 90–110, 134–154, 164–184, 189–209, 234–254, 271–291, 305–325, 334–354, 376–396, and 400–420; these read IIAA…LVSV, AVFT…IGIG, AAVH…FFLS, FIAS…KILF, IINA…HYLM, ITFA…IYIS, GFLI…IVMS, IFGL…PVCA, IIFL…LFIY, IIAN…LAVY, ILWL…WYFA, and GIVG…FWGL.

The protein localises to the cell inner membrane. It participates in bacterial outer membrane biogenesis; LPS O-antigen biosynthesis. Its function is as follows. May be involved in the translocation process of the nascent O-polysaccharide molecules and/or its ligation to lipid A core units. The sequence is that of Putative O-antigen transporter (rfbX) from Salmonella typhi.